An 84-amino-acid chain; its full sequence is Cell division topological specificity factor (84 aa).

The protein belongs to the MinE family.

Functionally, prevents the cell division inhibition by proteins MinC and MinD at internal division sites while permitting inhibition at polar sites. This ensures cell division at the proper site by restricting the formation of a division septum at the midpoint of the long axis of the cell. This Burkholderia cenocepacia (strain ATCC BAA-245 / DSM 16553 / LMG 16656 / NCTC 13227 / J2315 / CF5610) (Burkholderia cepacia (strain J2315)) protein is Cell division topological specificity factor.